A 731-amino-acid polypeptide reads, in one-letter code: Pre-B-cell leukemia transcription factor-interacting protein 1 (731 aa).

Residues 1 to 10 (MASCPDSDNS) are compositionally biased toward polar residues. The segment at 1–155 (MASCPDSDNS…SSSDDDTDVD (155 aa)) is disordered. At Ser-43 the chain carries Phosphoserine. 2 stretches are compositionally biased toward polar residues: residues 62 to 75 (LFQT…SILT) and 121 to 132 (LEGQSPPQSLPS). Ser-129, Ser-146, Ser-147, and Ser-148 each carry phosphoserine. Thr-152 bears the Phosphothreonine mark. Positions 270–348 (LLLDKLAKEN…QGLEADCVRG (79 aa)) form a coiled coil. Disordered regions lie at residues 354–377 (LSGG…QEPE), 447–572 (GQDP…DPLP), and 698–731 (LKKR…HHRG). Residues 364-375 (KAIREQGPREQE) show a composition bias toward basic and acidic residues. Positions 377–417 (ELSFLKQKEQLEAEAQALRQELERQRRLLGSVQQDLERSLQ) form a coiled coil. Basic and acidic residues-rich tracts occupy residues 472-499 (WSGK…ESGR), 508-543 (QEDR…EPPR), and 551-569 (SGEK…DSHD). A Nuclear localization signal motif is present at residues 485–505 (RKAEHWKHKKEESGRERKKNW). Ser-567 bears the Phosphoserine mark. The Nuclear localization signal signature appears at 695 to 720 (DKALKKRSGKKDKHSQSPRAAGPREG). The span at 698–707 (LKKRSGKKDK) shows a compositional bias: basic residues.

As to quaternary structure, interacts with TEX11. Interacts with ESR1, PBX1, PBX2 and PBX3. In terms of tissue distribution, expressed in early hematopoietic precursors.

It is found in the cytoplasm. The protein localises to the cytoskeleton. It localises to the nucleus. Functionally, regulator of pre-B-cell leukemia transcription factors (BPXs) function. Inhibits the binding of PBX1-HOX complex to DNA and blocks the transcriptional activity of E2A-PBX1. Tethers estrogen receptor-alpha (ESR1) to microtubules and allows them to influence estrogen receptors-alpha signaling. The chain is Pre-B-cell leukemia transcription factor-interacting protein 1 (PBXIP1) from Homo sapiens (Human).